The chain runs to 205 residues: Translation initiation factor 2 subunit beta (205 aa).

In terms of domain architecture, TRAM spans glycine 145 to aspartate 203.

The protein belongs to the eIF-2-beta/eIF-5 family. In terms of assembly, heterotrimer composed of an alpha, a beta and a gamma chain.

In terms of biological role, eIF-2 functions in the early steps of protein synthesis by forming a ternary complex with GTP and initiator tRNA. This chain is Translation initiation factor 2 subunit beta, found in Picrophilus torridus (strain ATCC 700027 / DSM 9790 / JCM 10055 / NBRC 100828 / KAW 2/3).